The primary structure comprises 1058 residues: Zinc finger protein 865 (1058 aa).

Disordered stretches follow at residues 1–24 (MEANQAGSGAGGGGSSGIGGEDGV), 58–134 (LPCT…PPLF), and 156–201 (GNLK…ACDP). Residues 8–21 (SGAGGGGSSGIGGE) show a composition bias toward gly residues. The segment covering 61–78 (TPGPPPQPPPQPPPPQYD) has biased composition (pro residues). The span at 93–113 (SSSSSSSSSSSSSSSSSSSSS) shows a compositional bias: low complexity. Positions 120-133 (PPLPPTFGAPPPPL) are enriched in pro residues. Positions 172–187 (GLGTPTGTPGPLTTPS) are enriched in low complexity. 2 C2H2-type zinc fingers span residues 220–242 (FPCGVCQKSFKQSSHLVQHMLVH) and 248–270 (YECGICGRTYNHVSSLIRHRRCH). Residues 269-342 (CHKDVPPTPT…PPGVAMPPSA (74 aa)) are disordered. Over residues 294–324 (PVSTASATASSDPAAVSSGPSATPATPATST) the composition is skewed to low complexity. 9 C2H2-type zinc fingers span residues 350 to 372 (FACSLCWKVFKKPSHLHQHQIIH), 378 to 400 (FSCSVCSKSFNRRESLKRHVKTH), 407 to 429 (LPCGICGKVFRDASYLLKHQAAH), 439 to 461 (YPCDLCGKTYSAPQSLLRHKAAH), 546 to 568 (FCCGICGRAFGRRETLKRHERIH), 574 to 596 (HQCPVCGKRFRESFHLSKHHVVH), 602 to 624 (YKCELCGKVFGYPQSLTRHRQVH), 664 to 686 (YACSDCGEHFPDLFHVMSHKEAH), and 692 to 714 (YGCDACGKTFGFIENLMWHKLVH). The tract at residues 459-486 (AAHAPPVATEPAKDGAASVPQPPPPFPP) is disordered. The segment at 721–743 (LLAPTPSGPQSSDGGSSGGGTDA) is disordered. 9 consecutive C2H2-type zinc fingers follow at residues 791 to 813 (FSCATCGQSFKHFLGLVTHKYVH), 819 to 841 (LGCGLCGQSFAGAYDLLLHRRSH), 847 to 869 (FRCPVCGKRFWEAALLMRHQRCH), 875 to 897 (YRCGVCGRGFLRSWYLRQHRVVH), 903 to 925 (FKCGVCAKHFAQSSSLAEHRRLH), 931 to 953 (QRCGACGKTFRYRSNLLEHQRLH), 959 to 981 (YRCEHCGKGFFYLSSVLRHQRAH), 988 to 1010 (LRCPACLKAFKDPGYFRKHLAAH), and 1016 to 1038 (FRCSSCGEGFANTYGLKKHRLMH). A Glycyl lysine isopeptide (Lys-Gly) (interchain with G-Cter in SUMO2) cross-link involves residue K801. Residue K1039 forms a Glycyl lysine isopeptide (Lys-Gly) (interchain with G-Cter in SUMO2) linkage.

It belongs to the krueppel C2H2-type zinc-finger protein family.

It is found in the nucleus. Its function is as follows. May be involved in transcriptional regulation. The sequence is that of Zinc finger protein 865 (Znf865) from Mus musculus (Mouse).